Here is a 971-residue protein sequence, read N- to C-terminus: Translation initiation factor IF-2 (971 aa).

Positions 39 to 379 are disordered; that stretch reads DQDANRLRTR…APRGNRRNVK (341 aa). Positions 53-63 are enriched in basic and acidic residues; it reads QGKEQAVEPRK. Residues 65–75 are compositionally biased toward polar residues; the sequence is VPSQESKNLTQ. Low complexity predominate over residues 310 to 326; it reads RPQGQRPMGDRPQGQRP. The span at 342 to 370 shows a compositional bias: basic and acidic residues; that stretch reads PPKRQIGEKKKPQDRNFERKKEMEKEIRA. Positions 471 to 640 constitute a tr-type G domain; sequence SRPPVVTVMG…LLVAEIKELK (170 aa). The segment at 480–487 is G1; it reads GHVDHGKT. Residue 480–487 participates in GTP binding; sequence GHVDHGKT. Positions 505 to 509 are G2; it reads GITQH. Residues 526 to 529 are G3; sequence DTPG. GTP-binding positions include 526 to 530 and 580 to 583; these read DTPGH and NKID. Residues 580-583 are G4; the sequence is NKID. The G5 stretch occupies residues 616–618; that stretch reads SAK.

Belongs to the TRAFAC class translation factor GTPase superfamily. Classic translation factor GTPase family. IF-2 subfamily.

It localises to the cytoplasm. Functionally, one of the essential components for the initiation of protein synthesis. Protects formylmethionyl-tRNA from spontaneous hydrolysis and promotes its binding to the 30S ribosomal subunits. Also involved in the hydrolysis of GTP during the formation of the 70S ribosomal complex. This chain is Translation initiation factor IF-2, found in Desulfitobacterium hafniense (strain Y51).